A 322-amino-acid polypeptide reads, in one-letter code: MLQTTPPDLLLGAPDLREAAAAWLAVLKTERRFSENTVEAYGRDLRQFLAHLARSGAAPDIPALVALKPRDLRAFMAARRAEGVSGRSLMRALAALRSFARHLDREGHGTVSALSAVRSPKVERRLPRPLPVAAAVAMASPDIRAGEDRPDWVLARDAAVLALLYGAGLRIGEALGIRRKDAPVGDIDTLTILGKGQKTRMVPVIAPVQAAVADYLAVCPHPLPPDGPLFVGQKGGPLSPRIVQLAVASLRGALGLPDSATPHALRHSFATHLLARQGDLRAIQDLLGHASLATTQVYTKVDSARLLSAFDAAHPRAGRPGG.

Positions 14-104 (PDLREAAAAW…ALRSFARHLD (91 aa)) constitute a Core-binding (CB) domain. The region spanning 125-311 (RLPRPLPVAA…DSARLLSAFD (187 aa)) is the Tyr recombinase domain. Active-site residues include Arg170, Lys195, His263, Arg266, and His289. Tyr298 functions as the O-(3'-phospho-DNA)-tyrosine intermediate in the catalytic mechanism.

Belongs to the 'phage' integrase family. XerC subfamily. As to quaternary structure, forms a cyclic heterotetrameric complex composed of two molecules of XerC and two molecules of XerD.

It is found in the cytoplasm. Functionally, site-specific tyrosine recombinase, which acts by catalyzing the cutting and rejoining of the recombining DNA molecules. The XerC-XerD complex is essential to convert dimers of the bacterial chromosome into monomers to permit their segregation at cell division. It also contributes to the segregational stability of plasmids. The chain is Tyrosine recombinase XerC from Methylobacterium nodulans (strain LMG 21967 / CNCM I-2342 / ORS 2060).